A 271-amino-acid chain; its full sequence is Tryptophan synthase alpha chain (271 aa).

Catalysis depends on proton acceptor residues Glu49 and Asp60.

It belongs to the TrpA family. As to quaternary structure, tetramer of two alpha and two beta chains.

It catalyses the reaction (1S,2R)-1-C-(indol-3-yl)glycerol 3-phosphate + L-serine = D-glyceraldehyde 3-phosphate + L-tryptophan + H2O. The protein operates within amino-acid biosynthesis; L-tryptophan biosynthesis; L-tryptophan from chorismate: step 5/5. In terms of biological role, the alpha subunit is responsible for the aldol cleavage of indoleglycerol phosphate to indole and glyceraldehyde 3-phosphate. The polypeptide is Tryptophan synthase alpha chain (Burkholderia lata (strain ATCC 17760 / DSM 23089 / LMG 22485 / NCIMB 9086 / R18194 / 383)).